The chain runs to 500 residues: Mannan polymerase II complex ANP1 subunit (500 aa).

Residues M1–V15 are Cytoplasmic-facing. The helical; Signal-anchor for type II membrane protein transmembrane segment at S16–L27 threads the bilayer. Residues T28–N500 lie on the Lumenal side of the membrane. Residues W424 to N500 are disordered. Residues Q446–Q467 show a composition bias toward low complexity. Residues K489–N500 are compositionally biased toward basic and acidic residues.

The protein belongs to the ANP1/MMN9/VAN1 family. In terms of assembly, component of the M-Pol II complex composed of ANP1, MNN9, MNN10, MNN11 and HOC1.

The protein localises to the endoplasmic reticulum membrane. Its subcellular location is the golgi apparatus membrane. Involved in the organization of the secretory pathway. Required to maintain a functional Golgi apparatus. Its function is as follows. The M-Pol II complex possesses alpha-1,6-mannosyltransferase activity and is probably involved in the elongation of the mannan backbone of N-linked glycans on cell wall and periplasmic proteins. This chain is Mannan polymerase II complex ANP1 subunit (ANP1), found in Saccharomyces cerevisiae (strain ATCC 204508 / S288c) (Baker's yeast).